Reading from the N-terminus, the 147-residue chain is MVHFTAEEKAAITSLWGQVNVEETGGEALGRLLVVYPWTQRFFDTFGNLSSASAIMGNPRVKAHGKKVLTSFGDAVKNLDNLKGTFAKLSELHCDKLHVDPENFRLLGNVLVIVLANHFGKEFTPQVQAAWQKMVTGVANALAYKYH.

Positions 3-147 constitute a Globin domain; that stretch reads HFTAEEKAAI…VANALAYKYH (145 aa). Positions 64 and 93 each coordinate heme b.

Belongs to the globin family. In terms of assembly, heterotetramer of two alpha chains and two gamma chains in fetal hemoglobin (Hb F). As to expression, red blood cells.

In terms of biological role, gamma chains make up the fetal hemoglobin F, in combination with alpha chains. The polypeptide is Hemoglobin subunit gamma (HBG) (Elephas maximus (Indian elephant)).